Here is a 198-residue protein sequence, read N- to C-terminus: Holliday junction branch migration complex subunit RuvA (198 aa).

The interval 1–63 is domain I; the sequence is MYDYIKGQLT…EDAQLLFGFH (63 aa). The tract at residues 64–142 is domain II; it reads SEEEKDVFLK…EAPKEESSKP (79 aa). The segment at 143–147 is flexible linker; the sequence is PKAKQ. Residues 148 to 198 form a domain III region; sequence QGNEQLDEAVEALLALGYKATELKKIRAFFEGTSETAEQYIKSALKMLMKG.

Belongs to the RuvA family. As to quaternary structure, homotetramer. Forms an RuvA(8)-RuvB(12)-Holliday junction (HJ) complex. HJ DNA is sandwiched between 2 RuvA tetramers; dsDNA enters through RuvA and exits via RuvB. An RuvB hexamer assembles on each DNA strand where it exits the tetramer. Each RuvB hexamer is contacted by two RuvA subunits (via domain III) on 2 adjacent RuvB subunits; this complex drives branch migration. In the full resolvosome a probable DNA-RuvA(4)-RuvB(12)-RuvC(2) complex forms which resolves the HJ.

It localises to the cytoplasm. Functionally, the RuvA-RuvB-RuvC complex processes Holliday junction (HJ) DNA during genetic recombination and DNA repair, while the RuvA-RuvB complex plays an important role in the rescue of blocked DNA replication forks via replication fork reversal (RFR). RuvA specifically binds to HJ cruciform DNA, conferring on it an open structure. The RuvB hexamer acts as an ATP-dependent pump, pulling dsDNA into and through the RuvAB complex. HJ branch migration allows RuvC to scan DNA until it finds its consensus sequence, where it cleaves and resolves the cruciform DNA. The polypeptide is Holliday junction branch migration complex subunit RuvA (Streptococcus equi subsp. equi (strain 4047)).